Consider the following 442-residue polypeptide: Probable glycine dehydrogenase (decarboxylating) subunit 1 (442 aa).

Belongs to the GcvP family. N-terminal subunit subfamily. The glycine cleavage system is composed of four proteins: P, T, L and H. In this organism, the P 'protein' is a heterodimer of two subunits.

It carries out the reaction N(6)-[(R)-lipoyl]-L-lysyl-[glycine-cleavage complex H protein] + glycine + H(+) = N(6)-[(R)-S(8)-aminomethyldihydrolipoyl]-L-lysyl-[glycine-cleavage complex H protein] + CO2. In terms of biological role, the glycine cleavage system catalyzes the degradation of glycine. The P protein binds the alpha-amino group of glycine through its pyridoxal phosphate cofactor; CO(2) is released and the remaining methylamine moiety is then transferred to the lipoamide cofactor of the H protein. This is Probable glycine dehydrogenase (decarboxylating) subunit 1 from Phenylobacterium zucineum (strain HLK1).